A 170-amino-acid chain; its full sequence is Large ribosomal subunit protein uL6m (170 aa).

This sequence belongs to the universal ribosomal protein uL6 family.

It localises to the mitochondrion. The chain is Large ribosomal subunit protein uL6m (mrpl6) from Dictyostelium discoideum (Social amoeba).